Consider the following 424-residue polypeptide: Serine--tRNA ligase (424 aa).

233 to 235 (TAE) contributes to the L-serine binding site. Residue 264 to 266 (RKE) participates in ATP binding. Glu287 is a binding site for L-serine. 351–354 (EISS) is a binding site for ATP. Ser386 is a binding site for L-serine.

Belongs to the class-II aminoacyl-tRNA synthetase family. Type-1 seryl-tRNA synthetase subfamily. Homodimer. The tRNA molecule binds across the dimer.

It is found in the cytoplasm. The catalysed reaction is tRNA(Ser) + L-serine + ATP = L-seryl-tRNA(Ser) + AMP + diphosphate + H(+). The enzyme catalyses tRNA(Sec) + L-serine + ATP = L-seryl-tRNA(Sec) + AMP + diphosphate + H(+). It functions in the pathway aminoacyl-tRNA biosynthesis; selenocysteinyl-tRNA(Sec) biosynthesis; L-seryl-tRNA(Sec) from L-serine and tRNA(Sec): step 1/1. Its function is as follows. Catalyzes the attachment of serine to tRNA(Ser). Is also able to aminoacylate tRNA(Sec) with serine, to form the misacylated tRNA L-seryl-tRNA(Sec), which will be further converted into selenocysteinyl-tRNA(Sec). The chain is Serine--tRNA ligase from Elusimicrobium minutum (strain Pei191).